We begin with the raw amino-acid sequence, 406 residues long: Na(+)/H(+) antiporter NhaA (406 aa).

A run of 12 helical transmembrane segments spans residues 29–49 (FAGILLIIAFTLAIIVSNNIF), 75–95 (FIELVNDGLMTFFFLLIGLEM), 111–131 (ILPAVAALGGVVVPVLIYMFF), 141–161 (GWAIPIATDTAFVLGILSFFS), 170–190 (AFIIGFSLIDDAFALIILALF), 195–215 (INTPALLISSVIIFILFILNY), 220–240 (QLFYYIIVGLLLWISMVESGI), 242–262 (GTLCGAIIALFIPVNIKGEFN), 278–298 (YFILPLFVFMNSGILLEYFAF), 306–326 (ILALIYGIIFGLFVGKQLGIM), 349–369 (FYSIAILGGIGFTLSLFIGSI), and 382–402 (AAVIIGSLISALFGVAVLKYC).

This sequence belongs to the NhaA Na(+)/H(+) (TC 2.A.33) antiporter family.

The protein resides in the cell inner membrane. It carries out the reaction Na(+)(in) + 2 H(+)(out) = Na(+)(out) + 2 H(+)(in). Na(+)/H(+) antiporter that extrudes sodium in exchange for external protons. The polypeptide is Na(+)/H(+) antiporter NhaA (Rickettsia massiliae (strain Mtu5)).